Here is a 94-residue protein sequence, read N- to C-terminus: Small ribosomal subunit protein bS18 (94 aa).

The segment covering 1–12 (MSEQNSRPQNSE) has biased composition (low complexity). Residues 1–29 (MSEQNSRPQNSERPQRSRRPQGGPRRRRK) form a disordered region. Residues 16–29 (RSRRPQGGPRRRRK) are compositionally biased toward basic residues.

Belongs to the bacterial ribosomal protein bS18 family. Part of the 30S ribosomal subunit. Forms a tight heterodimer with protein bS6.

In terms of biological role, binds as a heterodimer with protein bS6 to the central domain of the 16S rRNA, where it helps stabilize the platform of the 30S subunit. The protein is Small ribosomal subunit protein bS18 of Leuconostoc mesenteroides subsp. mesenteroides (strain ATCC 8293 / DSM 20343 / BCRC 11652 / CCM 1803 / JCM 6124 / NCDO 523 / NBRC 100496 / NCIMB 8023 / NCTC 12954 / NRRL B-1118 / 37Y).